A 245-amino-acid polypeptide reads, in one-letter code: Biosynthetic peptidoglycan transglycosylase (245 aa).

A helical transmembrane segment spans residues 13–35; that stretch reads VGLARWIVYAGSVFAGAWLATQL.

It belongs to the glycosyltransferase 51 family.

It is found in the cell inner membrane. The catalysed reaction is [GlcNAc-(1-&gt;4)-Mur2Ac(oyl-L-Ala-gamma-D-Glu-L-Lys-D-Ala-D-Ala)](n)-di-trans,octa-cis-undecaprenyl diphosphate + beta-D-GlcNAc-(1-&gt;4)-Mur2Ac(oyl-L-Ala-gamma-D-Glu-L-Lys-D-Ala-D-Ala)-di-trans,octa-cis-undecaprenyl diphosphate = [GlcNAc-(1-&gt;4)-Mur2Ac(oyl-L-Ala-gamma-D-Glu-L-Lys-D-Ala-D-Ala)](n+1)-di-trans,octa-cis-undecaprenyl diphosphate + di-trans,octa-cis-undecaprenyl diphosphate + H(+). It functions in the pathway cell wall biogenesis; peptidoglycan biosynthesis. Peptidoglycan polymerase that catalyzes glycan chain elongation from lipid-linked precursors. The polypeptide is Biosynthetic peptidoglycan transglycosylase (Burkholderia vietnamiensis (strain G4 / LMG 22486) (Burkholderia cepacia (strain R1808))).